We begin with the raw amino-acid sequence, 353 residues long: THUMP domain-containing protein 1 (353 aa).

Over residues 1–10 the composition is skewed to polar residues; it reads MAAPAQQTTQ. Disordered stretches follow at residues 1–20 and 73–96; these read MAAP…KGKA and YGPE…DDAE. A2 bears the N-acetylalanine mark. Phosphothreonine is present on T79. 3 positions are modified to phosphoserine: S86, S88, and S119. The THUMP domain maps to 147 to 254; sequence DMYKTKKKKT…KAVCCLSVVK (108 aa). Phosphoserine is present on S270. The segment at 270–353 is disordered; sequence SPKDPSQLNS…GSKSNENDFS (84 aa). A compositionally biased stretch (polar residues) spans 273–282; that stretch reads DPSQLNSKQG. Residues 283–296 show a composition bias toward basic and acidic residues; it reads NGKEAKLESADKSD. Polar residues predominate over residues 297 to 327; it reads QNNTAEGKNNQQVPENTEELGQTKPTSNPQV.

This sequence belongs to the THUMPD1 family. In terms of assembly, interacts with NAT10. Binds tRNA.

In terms of biological role, functions as a tRNA-binding adapter to mediate NAT10-dependent tRNA acetylation modifying cytidine to N4-acetylcytidine (ac4C). The sequence is that of THUMP domain-containing protein 1 (THUMPD1) from Homo sapiens (Human).